The chain runs to 341 residues: 4-(gamma-L-glutamylamino)butanoyl-[BtrI acyl-carrier protein] monooxygenase BtrO (341 aa).

It belongs to the bacterial luciferase oxidoreductase family.

It catalyses the reaction 4-(gamma-L-glutamylamino)butanoyl-[BtrI ACP] + FMNH2 + O2 = 4-(gamma-L-glutamylamino)-(2S)-2-hydroxybutanoyl-[BtrI ACP] + FMN + H2O + H(+). It functions in the pathway antibiotic biosynthesis; butirosin biosynthesis. Monooxygenase component of a two-component system involved in the biosynthesis of the side chain of the aminoglycoside antibiotics in the biosynthetic pathway of butirosin. Together with BtrV, mediates hydroxylation of gamma-L-Glu-GABA-S-BtrI. Not able to hydroxylate free substrates, activation by the acyl-carrier protein is mandatory. Octanoyl-S-[BtrI acyl-carrier protein] is also accepted as substrate. The chain is 4-(gamma-L-glutamylamino)butanoyl-[BtrI acyl-carrier protein] monooxygenase BtrO (btrO) from Niallia circulans (Bacillus circulans).